Consider the following 205-residue polypeptide: Ribosome maturation factor RimP (205 aa).

Residues 1–13 (MSNAEATTSSDRT) show a composition bias toward polar residues. Positions 1-27 (MSNAEATTSSDRTGTGKAEAESVHNPE) are disordered. Residues 18–27 (AEAESVHNPE) show a composition bias toward basic and acidic residues.

This sequence belongs to the RimP family.

The protein resides in the cytoplasm. In terms of biological role, required for maturation of 30S ribosomal subunits. The polypeptide is Ribosome maturation factor RimP (Arthrobacter sp. (strain FB24)).